A 347-amino-acid polypeptide reads, in one-letter code: Magnesium-protoporphyrin IX monomethyl ester [oxidative] cyclase (347 aa).

The protein belongs to the AcsF family. Requires Fe cation as cofactor.

It carries out the reaction Mg-protoporphyrin IX 13-monomethyl ester + 3 NADPH + 3 O2 + 2 H(+) = 3,8-divinyl protochlorophyllide a + 3 NADP(+) + 5 H2O. It participates in porphyrin-containing compound metabolism; chlorophyll biosynthesis (light-independent). In terms of biological role, catalyzes the formation of the isocyclic ring in chlorophyll biosynthesis. Mediates the cyclase reaction, which results in the formation of divinylprotochlorophyllide (Pchlide) characteristic of all chlorophylls from magnesium-protoporphyrin IX 13-monomethyl ester (MgPMME). The protein is Magnesium-protoporphyrin IX monomethyl ester [oxidative] cyclase of Prochlorococcus marinus (strain SARG / CCMP1375 / SS120).